A 99-amino-acid chain; its full sequence is Cell cycle protein GpsB (99 aa).

Positions 34 to 71 form a coiled coil; it reads LDMIIKDYETFHQEIEELQQENLQLKKQLEEASKKQPV.

The protein belongs to the GpsB family. In terms of assembly, forms polymers through the coiled coil domains. Interacts with PBP1, MreC and EzrA.

Its subcellular location is the cytoplasm. Divisome component that associates with the complex late in its assembly, after the Z-ring is formed, and is dependent on DivIC and PBP2B for its recruitment to the divisome. Together with EzrA, is a key component of the system that regulates PBP1 localization during cell cycle progression. Its main role could be the removal of PBP1 from the cell pole after pole maturation is completed. Also contributes to the recruitment of PBP1 to the division complex. Not essential for septum formation. The chain is Cell cycle protein GpsB from Bacillus velezensis (strain DSM 23117 / BGSC 10A6 / LMG 26770 / FZB42) (Bacillus amyloliquefaciens subsp. plantarum).